A 211-amino-acid polypeptide reads, in one-letter code: UPF0502 protein PC1_1804 (211 aa).

The disordered stretch occupies residues S168–L188.

Belongs to the UPF0502 family.

The protein is UPF0502 protein PC1_1804 of Pectobacterium carotovorum subsp. carotovorum (strain PC1).